The chain runs to 169 residues: Disulfide bond formation protein B (169 aa).

The Cytoplasmic portion of the chain corresponds to 1–13 (MQSLISFAHSRLS). The helical transmembrane segment at 14–30 (WGILALSALALESAALY) threads the bilayer. At 31–48 (FQHIMKLDPCVMCIYQRV) the chain is on the periplasmic side. C40 and C43 form a disulfide bridge. A helical transmembrane segment spans residues 49–64 (AVFGLLGAGLFGFMAP). Topologically, residues 65 to 71 (ANRVIRA) are cytoplasmic. Residues 72–89 (LGALLWGISAAWGLKLAL) form a helical membrane-spanning segment. At 90–144 (ELVDMQNNPNPFSTCSFLPEFPSWLQLHEWLPSVFMPTGMCTDIPWEFAGVTMGE) the chain is on the periplasmic side. C104 and C130 form a disulfide bridge. A helical membrane pass occupies residues 145 to 163 (WMIVAFSVYLLAWLAFIVP). The Cytoplasmic segment spans residues 164–169 (MLKKSA).

This sequence belongs to the DsbB family.

Its subcellular location is the cell inner membrane. Functionally, required for disulfide bond formation in some periplasmic proteins. Acts by oxidizing the DsbA protein. The polypeptide is Disulfide bond formation protein B (Shewanella amazonensis (strain ATCC BAA-1098 / SB2B)).